The sequence spans 102 residues: Guanyl-specific ribonuclease Pc (102 aa).

Intrachain disulfides connect Cys-2/Cys-10 and Cys-6/Cys-101. His-38 is a catalytic residue. The active-site Proton acceptor is the Glu-56. Residue His-90 is the Proton donor of the active site.

It belongs to the ribonuclease N1/T1 family.

The catalysed reaction is [RNA] containing guanosine + H2O = an [RNA fragment]-3'-guanosine-3'-phosphate + a 5'-hydroxy-ribonucleotide-3'-[RNA fragment].. In Penicillium chrysogenum (Penicillium notatum), this protein is Guanyl-specific ribonuclease Pc.